Reading from the N-terminus, the 78-residue chain is UPF0349 protein SAHV_0934 (78 aa).

This sequence belongs to the UPF0349 family.

In Staphylococcus aureus (strain Mu3 / ATCC 700698), this protein is UPF0349 protein SAHV_0934.